Here is a 57-residue protein sequence, read N- to C-terminus: Large ribosomal subunit protein bL32 (57 aa).

This sequence belongs to the bacterial ribosomal protein bL32 family.

This is Large ribosomal subunit protein bL32 from Staphylococcus haemolyticus (strain JCSC1435).